The chain runs to 115 residues: Large ribosomal subunit protein P2 (115 aa).

Met-1 carries the N-acetylmethionine modification. 2 positions are modified to phosphoserine: Ser-17 and Ser-19. Lys-21 carries the post-translational modification N6-acetyllysine; alternate. An N6-succinyllysine; alternate modification is found at Lys-21. Positions 78–90 are enriched in low complexity; that stretch reads GSAAPAAGSAPAA. A disordered region spans residues 78–115; the sequence is GSAAPAAGSAPAAAEEKKDEKKEESEESDDDMGFGLFD. 2 positions are modified to phosphoserine: Ser-79 and Ser-86. Residues 91–101 are compositionally biased toward basic and acidic residues; the sequence is AEEKKDEKKEE. Residues Ser-102 and Ser-105 each carry the phosphoserine modification.

Belongs to the eukaryotic ribosomal protein P1/P2 family. In terms of assembly, heterodimer with P1 at the lateral ribosomal stalk of the large ribosomal subunit.

Its function is as follows. Plays an important role in the elongation step of protein synthesis. In Homo sapiens (Human), this protein is Large ribosomal subunit protein P2 (RPLP2).